The following is a 262-amino-acid chain: tRNA pseudouridine synthase A (262 aa).

The Nucleophile role is filled by D51. Residue Y106 coordinates substrate.

It belongs to the tRNA pseudouridine synthase TruA family.

The enzyme catalyses uridine(38/39/40) in tRNA = pseudouridine(38/39/40) in tRNA. In terms of biological role, formation of pseudouridine at positions 38, 39 and 40 in the anticodon stem and loop of transfer RNAs. In Pyrococcus horikoshii (strain ATCC 700860 / DSM 12428 / JCM 9974 / NBRC 100139 / OT-3), this protein is tRNA pseudouridine synthase A.